Reading from the N-terminus, the 456-residue chain is UPF0496 protein 4 (456 aa).

The helical transmembrane segment at 195–217 (VLMRALYGIESVTVFVCSIFVAV) threads the bilayer. Residues 368 to 390 (QDSNVKQANGSSDESALVVPERT) form a disordered region. Residues 371–381 (NVKQANGSSDE) show a composition bias toward polar residues.

The protein belongs to the ROH1 family.

It is found in the membrane. The protein is UPF0496 protein 4 of Oryza sativa subsp. japonica (Rice).